The sequence spans 431 residues: Enolase (431 aa).

Q166 is a (2R)-2-phosphoglycerate binding site. E208 serves as the catalytic Proton donor. Mg(2+) is bound by residues D245, E288, and D315. K340, R369, S370, and K391 together coordinate (2R)-2-phosphoglycerate. Residue K340 is the Proton acceptor of the active site.

It belongs to the enolase family. The cofactor is Mg(2+).

The protein localises to the cytoplasm. Its subcellular location is the secreted. It is found in the cell surface. The enzyme catalyses (2R)-2-phosphoglycerate = phosphoenolpyruvate + H2O. Its pathway is carbohydrate degradation; glycolysis; pyruvate from D-glyceraldehyde 3-phosphate: step 4/5. Its function is as follows. Catalyzes the reversible conversion of 2-phosphoglycerate (2-PG) into phosphoenolpyruvate (PEP). It is essential for the degradation of carbohydrates via glycolysis. In Clostridium tetani (strain Massachusetts / E88), this protein is Enolase.